A 371-amino-acid chain; its full sequence is Bifunctional enzyme IspD/IspF (371 aa).

The tract at residues 1–212 (MKDITLVLLA…FDFTPASGTI (212 aa)) is 2-C-methyl-D-erythritol 4-phosphate cytidylyltransferase. The tract at residues 213–371 (FTGNGFDVHA…NLGYFDWRKF (159 aa)) is 2-C-methyl-D-erythritol 2,4-cyclodiphosphate synthase. A divalent metal cation is bound by residues Asp219 and His221. 4-CDP-2-C-methyl-D-erythritol 2-phosphate contacts are provided by residues 219–221 (DVH) and 245–246 (HS). His253 serves as a coordination point for a divalent metal cation. 4-CDP-2-C-methyl-D-erythritol 2-phosphate-binding positions include 267–269 (DIG), 272–276 (FPDTD), 341–344 (STTE), Phe348, and Arg351.

In the N-terminal section; belongs to the IspD/TarI cytidylyltransferase family. IspD subfamily. This sequence in the C-terminal section; belongs to the IspF family. It depends on a divalent metal cation as a cofactor.

It carries out the reaction 2-C-methyl-D-erythritol 4-phosphate + CTP + H(+) = 4-CDP-2-C-methyl-D-erythritol + diphosphate. The catalysed reaction is 4-CDP-2-C-methyl-D-erythritol 2-phosphate = 2-C-methyl-D-erythritol 2,4-cyclic diphosphate + CMP. It functions in the pathway isoprenoid biosynthesis; isopentenyl diphosphate biosynthesis via DXP pathway; isopentenyl diphosphate from 1-deoxy-D-xylulose 5-phosphate: step 2/6. It participates in isoprenoid biosynthesis; isopentenyl diphosphate biosynthesis via DXP pathway; isopentenyl diphosphate from 1-deoxy-D-xylulose 5-phosphate: step 4/6. In terms of biological role, bifunctional enzyme that catalyzes the formation of 4-diphosphocytidyl-2-C-methyl-D-erythritol from CTP and 2-C-methyl-D-erythritol 4-phosphate (MEP) (IspD), and catalyzes the conversion of 4-diphosphocytidyl-2-C-methyl-D-erythritol 2-phosphate (CDP-ME2P) to 2-C-methyl-D-erythritol 2,4-cyclodiphosphate (ME-CPP) with a corresponding release of cytidine 5-monophosphate (CMP) (IspF). The sequence is that of Bifunctional enzyme IspD/IspF from Campylobacter hominis (strain ATCC BAA-381 / DSM 21671 / CCUG 45161 / LMG 19568 / NCTC 13146 / CH001A).